Reading from the N-terminus, the 583-residue chain is MMRTNYCGDINKNYVNSVQVLCGWVNSYRDHGGVLFLDLRDRTGKVQVVVEPTNKDFELASTARTEYVLKVTGLVRLRQTEHINPNNPTGEIEVVAQEVEILNTSIQLPFEPDNSRQINEETRLKYRYIDLRNPVMLHNLTTRHKVAQAARRYFSDNGFIEIETPILTRSTPEGARDYLVPSRVHEGKFYALPQSPQMFKQTLMASGVDRYFQIARAFRDEDLRSDRQPEHTQIDIEMSFVTLADVFAAGEGMIAEVFKAAGEDAPAAPFEQMEYADVMAKYGSDKPDIRYEIDITDIGGIFTNSNFKVVSDALANGGVVRAIKAKYGAKHINRSTCDKLTDLAKASGAKGLVWLKYSDDKFEGPSAKFFTEEELASLQHTLSVEKDDMVFIGADKEKVVSPVMGAIRKELIKLLCLKPNKKWAFLWVKHFPLLEFVPEENRWDAAHNPFTAPLEKDIPLLDTDPGKVKSYQFDLVLNGVELASGSIRNHRRDLQEKILNLMKHSPEQAALRFGMLLNALEAGAPPHGGFGMGLDRLAALLCKEESIREVIAFPKTATAYCPLTESPNVVEDIQLKELHIKIK.

Glu173 contributes to the L-aspartate binding site. The aspartate stretch occupies residues 197 to 200; the sequence is QMFK. Arg219 lines the L-aspartate pocket. ATP-binding positions include 219 to 221 and Gln228; that span reads RDE. His447 lines the L-aspartate pocket. Glu481 lines the ATP pocket. Position 488 (Arg488) interacts with L-aspartate. 533–536 is an ATP binding site; sequence GLDR.

The protein belongs to the class-II aminoacyl-tRNA synthetase family. Type 1 subfamily. Homodimer.

The protein localises to the cytoplasm. The enzyme catalyses tRNA(Asx) + L-aspartate + ATP = L-aspartyl-tRNA(Asx) + AMP + diphosphate. In terms of biological role, aspartyl-tRNA synthetase with relaxed tRNA specificity since it is able to aspartylate not only its cognate tRNA(Asp) but also tRNA(Asn). Reaction proceeds in two steps: L-aspartate is first activated by ATP to form Asp-AMP and then transferred to the acceptor end of tRNA(Asp/Asn). In Elusimicrobium minutum (strain Pei191), this protein is Aspartate--tRNA(Asp/Asn) ligase.